An 86-amino-acid chain; its full sequence is Progonadoliberin IIB (86 aa).

Positions 1 to 24 (MVHICRLFVVMGMLMFLSVQFASS) are cleaved as a signal peptide. Gln-25 carries the post-translational modification Pyrrolidone carboxylic acid. Gly-34 carries the glycine amide modification.

It belongs to the GnRH family. As to expression, olfactory bulbs, hypothalamus and telencephalon, midbrain and posterior brain areas.

Its subcellular location is the secreted. Stimulates the secretion of gonadotropins. In Carassius auratus (Goldfish), this protein is Progonadoliberin IIB (gnrh2b).